A 92-amino-acid polypeptide reads, in one-letter code: Protein S100-B (92 aa).

S2 is subject to N-acetylserine. EF-hand domains lie at 13 to 48 (DVFHQYSGREGDKHKLKKSELKELINNELSHFLEEI) and 49 to 84 (KEQEVVDKVMETLDEDGDGECDFQEFMAFVAMVTTA). A Zn(2+)-binding site is contributed by H16. 3 residues coordinate Ca(2+): S19, E22, and D24. H26 is a Zn(2+) binding site. Ca(2+)-binding residues include D62, D64, D66, E68, and E73. The Zn(2+) site is built by H86 and H91.

Belongs to the S-100 family. In terms of assembly, dimer of either two alpha chains, or two beta chains, or one alpha and one beta chain. The S100B dimer binds two molecules of STK38. Interacts with CACYBP in a calcium-dependent manner. Interacts with ATAD3A; this interaction probably occurs in the cytosol prior to ATAD3A mitochondrial targeting. Interacts with S100A6. The S100B dimer interacts with two molecules of CAPZA1. Interacts with AGER. Interacts with PPP5C (via TPR repeats); the interaction is calcium-dependent and modulates PPP5C activity. Interacts with TPPP; this interaction inhibits TPPP dimerization. Interacts with isoform CLSTN3beta of CLSTN3; interaction promotes secretion.

The protein localises to the cytoplasm. It is found in the nucleus. Its subcellular location is the secreted. Small zinc- and- and calcium-binding protein that is highly expressed in astrocytes and constitutes one of the most abundant soluble proteins in brain. Weakly binds calcium but binds zinc very tightly-distinct binding sites with different affinities exist for both ions on each monomer. Physiological concentrations of potassium ion antagonize the binding of both divalent cations, especially affecting high-affinity calcium-binding sites. Acts as a neurotrophic factor that promotes astrocytosis and axonal proliferation. Involved in innervation of thermogenic adipose tissue by acting as an adipocyte-derived neurotrophic factor that promotes sympathetic innervation of adipose tissue. Binds to and initiates the activation of STK38 by releasing autoinhibitory intramolecular interactions within the kinase. Interaction with AGER after myocardial infarction may play a role in myocyte apoptosis by activating ERK1/2 and p53/TP53 signaling. Could assist ATAD3A cytoplasmic processing, preventing aggregation and favoring mitochondrial localization. May mediate calcium-dependent regulation on many physiological processes by interacting with other proteins, such as TPR-containing proteins, and modulating their activity. The chain is Protein S100-B from Mus musculus (Mouse).